The following is a 266-amino-acid chain: NAD kinase 2 (266 aa).

Residue aspartate 51 is the Proton acceptor of the active site. NAD(+) contacts are provided by residues 51–52, 123–124, arginine 150, aspartate 152, 163–168, and alanine 187; these read DG, NE, and TGYSKS.

It belongs to the NAD kinase family. Requires a divalent metal cation as cofactor.

The protein resides in the cytoplasm. It catalyses the reaction NAD(+) + ATP = ADP + NADP(+) + H(+). Involved in the regulation of the intracellular balance of NAD and NADP, and is a key enzyme in the biosynthesis of NADP. Catalyzes specifically the phosphorylation on 2'-hydroxyl of the adenosine moiety of NAD to yield NADP. The sequence is that of NAD kinase 2 from Oceanobacillus iheyensis (strain DSM 14371 / CIP 107618 / JCM 11309 / KCTC 3954 / HTE831).